Here is a 99-residue protein sequence, read N- to C-terminus: DNA-directed RNA polymerase subunit omega (99 aa).

It belongs to the RNA polymerase subunit omega family. In terms of assembly, the RNAP catalytic core consists of 2 alpha, 1 beta, 1 beta' and 1 omega subunit. When a sigma factor is associated with the core the holoenzyme is formed, which can initiate transcription.

The catalysed reaction is RNA(n) + a ribonucleoside 5'-triphosphate = RNA(n+1) + diphosphate. In terms of biological role, promotes RNA polymerase assembly. Latches the N- and C-terminal regions of the beta' subunit thereby facilitating its interaction with the beta and alpha subunits. In Stenotrophomonas maltophilia (strain K279a), this protein is DNA-directed RNA polymerase subunit omega.